Here is a 2474-residue protein sequence, read N- to C-terminus: Polyprotein P1234 (2474 aa).

Residues 28-259 (EPRQVTPNDH…ESRKLLKSWH (232 aa)) enclose the Alphavirus-like MT domain. Histidine 37 serves as the catalytic For mRNA-capping enzyme nsP1 activity. Histidine 79, glutamate 129, cysteine 134, and cysteine 141 together coordinate Zn(2+). Residues 295 to 450 (GLYGKTTGYA…QKVPAEFDSF (156 aa)) are membrane-binding and oligomerization. 2 S-palmitoyl cysteine; by host lipidation sites follow: cysteine 417 and cysteine 419. The (+)RNA virus helicase ATP-binding domain occupies 690–842 (DLTNPPYHEF…HNICTQVYHK (153 aa)). 721–728 (GVPGSGKS) is an a ribonucleoside 5'-triphosphate binding site. The (+)RNA virus helicase C-terminal domain maps to 843–991 (SISRRCTLPV…IKEWEVEHAS (149 aa)). The 324-residue stretch at 1004 to 1327 (DTFQNKANVC…NQLNAAFVGQ (324 aa)) folds into the Peptidase C9 domain. A nucleolus localization signal region spans residues 1005–1024 (TFQNKANVCWAKSLVPILET). Cysteine 1013 functions as the For cysteine protease nsP2 activity in the catalytic mechanism. A Nuclear export signal motif is present at residues 1058–1067 (TRMYGVDLDS). The For cysteine protease nsP2 activity role is filled by histidine 1083. Positions 1182–1186 (PTKRV) match the Nuclear localization signal motif. The region spanning 1334–1493 (APSYRVKRMD…KIAEAIQMRT (160 aa)) is the Macro domain. The ADP-D-ribose site is built by aspartate 1343, asparagine 1357, glycine 1365, glycine 1445, valine 1446, and tyrosine 1447. Zn(2+) is bound by residues cysteine 1595, cysteine 1597, cysteine 1620, and cysteine 1638. A disordered region spans residues 1651–1706 (RVSPREYKSPQETAQEVSSTTSLTHSQFDLSVDGEELPAPSDLEADAPIPEPTPDD). The HVD stretch occupies residues 1659 to 1857 (SPQETAQEVS…TCSDTDDELX (199 aa)). Over residues 1660-1679 (PQETAQEVSSTTSLTHSQFD) the composition is skewed to polar residues. 2 interaction with host CD2AP regions span residues 1726–1739 (VMNT…RRRR) and 1756–1767 (PMASVRFFRADL). The segment at 1745–1793 (VTCDEREGNVLPMASVRFFRADLHSIVQETAEIRDTAASLQAPLSVATE) is interaction with host FHL1. The FGDF; binding to host G3BP1 signature appears at 1812–1815 (FGDF). The tract at residues 1820–1828 (IESLSSELL) is interaction with host CD2AP. Residues 1830 to 1833 (FGDF) carry the FGDF; binding to host G3BP1 motif. In terms of domain architecture, RdRp catalytic spans 2228–2343 (DAVLETDIAS…HGVVSDELMA (116 aa)).

As to quaternary structure, homododecamer. The enzyme forms a membrane-associated dodecameric ring with a central channel for the exchange of between the viral replication factories and the host cytoplasm. Interacts with non-structural protein 3. Interacts with RNA-directed RNA polymerase nsP4. Interacts with protease nsP2. Interacts with itself. Interacts with host STING1; this interaction results in inhibition of cGAS-STING signaling and increased levels of palmitoylation and protein stabilization of nsP1. Interacts with host TMEM45B; this interaction leads to viral replication inhibition. Interacts with mRNA-capping enzyme nsP1. Interacts (via C-terminus) with host G3BP1; this interaction inhibits the formation of host stress granules on viral mRNAs and the nsp3-G3BP1 complexes bind viral RNAs and probably orchestrate the assembly of viral replication complexes. Interacts (via C-terminus) with host G3BP2; this interaction inhibits the formation of host stress granules on viral mRNAs and the nsp3-G3BP2 complexes bind viral RNAs and probably orchestrate the assembly of viral replication complexes. Interacts (via C-terminus) with host NAP1L1. Interacts (via C-terminus) with host NAP1L4. Interacts (via C-terminus) with host DHX9; this interaction allows the recruitment of DHX9 to the plasma membrane, where it associates with viral replication complexes and may play a role in the translation-to-replication switch. Interacts (via C-terminus) with host FHL1 (via LIM domain 1); this interaction is required for viral RNA replication. Interacts (via C-terminus) with host CD2AP; this interaction plays a role in initiation of viral replication. Interacts (via C-terminus) with host SH3KBP1; this interaction plays a role in initiation of viral replication. In terms of assembly, interacts with mRNA-capping enzyme nsP1. Interacts with protease nsP2. interacts with itself. Interacts with host TMEM45B; this interaction leads to viral replication inhibition. As to quaternary structure, interacts with RNA-directed RNA polymerase nsP4. Interacts with mRNA-capping enzyme nsP1. Interacts with KPNA1/karyopherin-alpha1; this interaction probably allows the active transport of protease nsP2 into the host nucleus. Mg(2+) is required as a cofactor. It depends on Mn(2+) as a cofactor. Specific enzymatic cleavages in vivo yield mature proteins. The processing of the polyprotein is temporally regulated. In early stages (1.7 hpi), P1234 is first cleaved in trans through its nsP2 protease activity, releasing P123' and nsP4, which associate to form the early replication complex. At the same time, P1234 is also cut at the nsP1/nsP2 site early in infection but with lower efficiency. After replication of the viral minus-strand RNAs (4 hpi), the polyproteins are cut at the nsP1/nsP2 and nsP2/nsP3 sites very efficiently, preventing accumulation of P123' and P1234 and allowing the formation of the late replication complex. NsP3'/nsP4 site is not cleaved anymore and P34 is produced rather than nsP4. In terms of processing, specific enzymatic cleavages in vivo yield mature proteins. The processing of the polyprotein is temporally regulated. In early stages (1.7 hpi), P123 is cleaved at the nsP1/nsP2 site with low efficiency. After replication of the viral minus-strand RNAs (4 hpi), the polyproteins are cut at the nsP1/nsP2 and nsP2/nsP3 sites very efficiently, preventing accumulation of P123 and allowing the formation of the late replication complex. Post-translationally, specific enzymatic cleavages in vivo yield mature proteins. The processing of the polyprotein is temporally regulated. In early stages (1.7 hpi), P123' is cleaved at the nsP1/nsP2 site with low efficiency. After replication of the viral minus-strand RNAs (4 hpi), the polyproteins are cut at the nsP1/nsP2 and nsP2/nsP3 sites very efficiently, preventing accumulation of P123' and allowing the formation of the late replication complex. Palmitoylated by host palmitoyltransferases ZDHHC2 and ZDHHC19. Palmitoylation is increased by the interacton with host STING1. In terms of processing, phosphorylated by host on serines and threonines. Post-translationally, ubiquitinated; targets the protein for rapid degradation via the ubiquitin system. Nsp4 is present in extremely low quantities due to low frequency of translation through the amber stop-codon and the degradation by the ubiquitin pathway.

The protein resides in the host cytoplasmic vesicle membrane. The protein localises to the host cell membrane. Its subcellular location is the host cell projection. It localises to the host filopodium. It is found in the host nucleus. The protein resides in the host cytoplasm. The enzyme catalyses GTP + S-adenosyl-L-methionine = N(7)-methyl-GTP + S-adenosyl-L-homocysteine. The catalysed reaction is N(7)-methyl-GTP + L-histidyl-[protein] = N(tele)-(N(7)-methylguanosine 5'-phospho)-L-histidyl-[protein] + diphosphate. It catalyses the reaction N(tele)-(N(7)-methylguanosine 5'-phospho)-L-histidyl-[protein] + a 5'-end diphospho-(purine-ribonucleoside) in mRNA + H(+) = a 5'-end (N(7)-methyl 5'-triphosphoguanosine)-(purine-ribonucleoside) in mRNA + L-histidyl-[protein]. It carries out the reaction a 5'-end triphospho-ribonucleoside in mRNA + H2O = a 5'-end diphospho-ribonucleoside in mRNA + phosphate + H(+). The enzyme catalyses a ribonucleoside 5'-triphosphate + H2O = a ribonucleoside 5'-diphosphate + phosphate + H(+). The catalysed reaction is ATP + H2O = ADP + phosphate + H(+). It catalyses the reaction RNA(n) + a ribonucleoside 5'-triphosphate = RNA(n+1) + diphosphate. It carries out the reaction 4-O-(ADP-D-ribosyl)-L-aspartyl-[protein] + H2O = L-aspartyl-[protein] + ADP-D-ribose + H(+). The enzyme catalyses 5-O-(ADP-D-ribosyl)-L-glutamyl-[protein] + H2O = L-glutamyl-[protein] + ADP-D-ribose + H(+). The catalysed reaction is RNA(n) + ATP = RNA(n)-3'-adenine ribonucleotide + diphosphate. It catalyses the reaction ADP-alpha-D-ribose 1''-phosphate + H2O = ADP-D-ribose + phosphate. Its function is as follows. Inactive precursor of the viral replicase, which is activated by cleavages carried out by the viral protease nsP2. The early replication complex formed by the polyprotein P123 and nsP4 synthesizes minus-strand RNAs. As soon P123 is cleaved into mature proteins, the plus-strand RNAs synthesis begins. In terms of biological role, the early replication complex formed by the polyprotein P123' and nsP4 synthesizes minus-strand RNAs. Polyprotein P123' is a short-lived polyprotein that accumulates during early stage of infection. As soon P123' is cleaved into mature proteins, the plus-strand RNAs synthesis begins. Functionally, cytoplasmic capping enzyme that catalyzes two virus-specific reactions: methyltransferase and guanylyltransferase. mRNA-capping is necessary since all viral RNAs are synthesized in the cytoplasm, and host capping enzymes are restricted to the nucleus. The enzymatic reaction involves a covalent link between 7-methyl-GMP and nsP1, whereas eukaryotic capping enzymes form a covalent complex only with GMP. nsP1 capping consists in the following reactions: GTP is first methylated into 7-methyl-GMP and then is covalently linked to nsP1 to form the m7GMp-nsP1 complex from which 7-methyl-GMP complex is transferred to the mRNA to create the cap structure. NsP1 is also needed for the initiation of the minus-strand RNAs synthesis. At the initiation of virus replication, mediates the assembly of the viral replication complex made of the non-structural proteins, the association of this complex with the inner face of the plasma membrane and the formation of membranous spherules that serve as replication complex factories. Forms the neck of these spherules with a central channel for mediating communication and the passage of RNA, nucleotides, and small proteins between the viral replication complex and the host cytoplasm. Palmitoylated nsP1 is remodeling host cell cytoskeleton, and induces filopodium-like structure formation at the surface of the host cell. Its function is as follows. Multifunctional protein whose N-terminus is part of the RNA polymerase complex and displays NTPase, RNA triphosphatase and helicase activities. NTPase and RNA triphosphatase are involved in viral RNA capping and helicase keeps a check on the dsRNA replication intermediates. The C-terminus harbors a protease that specifically cleaves the polyproteins and releases the mature proteins. Required for the shutoff of minus-strand RNAs synthesis. Specifically inhibits the host IFN response by promoting the nuclear export of host STAT1. Also inhibits host transcription by inducing the rapid proteasome-dependent degradation of POLR2A, a catalytic subunit of the RNAPII complex. The resulting inhibition of cellular protein synthesis serves to ensure maximal viral gene expression and to evade host immune response. Seems to be essential for minus-strand RNAs and subgenomic 26S mRNAs synthesis. Displays mono-ADP-ribosylhydrolase activity. ADP-ribosylation is a post-translational modification that controls various processes of the host cell and the virus probably needs to revert it for optimal viral replication. Binds proteins of FXR family and sequesters them into the viral RNA replication complexes thereby inhibiting the formation of host stress granules on viral mRNAs. The nsp3'-FXR complexes bind viral RNAs and probably orchestrate the assembly of viral replication complexes, thanks to the ability of FXR family members to self-assemble and bind DNA. In terms of biological role, seems to be essential for minus-strand RNAs and subgenomic 26S mRNAs synthesis. Displays mono-ADP-ribosylhydrolase activity. ADP-ribosylation is a post-translational modification that controls various processes of the host cell and the virus probably needs to revert it for optimal viral replication. Binds proteins of G3BP family and sequesters them into the viral RNA replication complexes thereby inhibiting the formation of host stress granules on viral mRNAs. The nsp3-G3BP complexes bind viral RNAs and probably orchestrate the assembly of viral replication complexes, thanks to the ability of G3BP family members to self-assemble and bind DNA. Functionally, RNA dependent RNA polymerase. Replicates genomic and antigenomic RNA by recognizing replications specific signals. The early replication complex formed by the polyprotein P123 and nsP4 synthesizes minus-strand RNAs. The late replication complex composed of fully processed nsP1-nsP4 is responsible for the production of genomic and subgenomic plus-strand RNAs. The protein is Polyprotein P1234 of Aedes aegypti (Yellowfever mosquito).